A 434-amino-acid chain; its full sequence is Polyadenylate-binding protein RBP47C' (434 aa).

The tract at residues 1 to 50 (MADVKVQSESESSDSHPLVDYQSLPPYPPPHPPVEVEENQPKTSPTPPPP) is disordered. RRM domains follow at residues 103–185 (KTIW…WASF), 199–278 (LSIF…PATP), and 306–378 (TTIF…WGRN).

The protein belongs to the polyadenylate-binding RBP47 family. In terms of assembly, interacts with the poly(A) tail of mRNA in nucleus.

It localises to the nucleus. It is found in the cytoplasmic granule. Heterogeneous nuclear ribonucleoprotein (hnRNP)-protein binding the poly(A) tail of mRNA and probably involved in some steps of pre-mRNA maturation. The chain is Polyadenylate-binding protein RBP47C' (RBP47C') from Arabidopsis thaliana (Mouse-ear cress).